Reading from the N-terminus, the 504-residue chain is Pyruvate kinase (504 aa).

Arginine 53 is a binding site for substrate. Positions 55, 57, 88, and 89 each coordinate K(+). An ATP-binding site is contributed by 55–58 (NFSH). The ATP site is built by arginine 95 and lysine 181. Glutamate 246 contributes to the Mg(2+) binding site. The substrate site is built by glycine 269, aspartate 270, and threonine 302. Mg(2+) is bound at residue aspartate 270.

It belongs to the pyruvate kinase family. Homotetramer. Requires Mg(2+) as cofactor. K(+) is required as a cofactor.

The protein localises to the cytoplasm. It catalyses the reaction pyruvate + ATP = phosphoenolpyruvate + ADP + H(+). Its pathway is carbohydrate degradation; glycolysis; pyruvate from D-glyceraldehyde 3-phosphate: step 5/5. This is Pyruvate kinase (CDC19) from Candida albicans (strain SC5314 / ATCC MYA-2876) (Yeast).